A 299-amino-acid chain; its full sequence is Ribosome-inactivating protein saporin-6 (299 aa).

Positions 1–24 (MKIYVVATIAWILLQFSAWTTTDA) are cleaved as a signal peptide. The active site involves E200. Residues 278–299 (SSNEANSTVRHYGPLKPTLLIT) constitute a propeptide that is removed on maturation. N-linked (GlcNAc...) asparagine glycosylation occurs at N283.

Belongs to the ribosome-inactivating protein family. Type 1 RIP subfamily. Seeds and leaves of the plant.

The enzyme catalyses Endohydrolysis of the N-glycosidic bond at one specific adenosine on the 28S rRNA.. In terms of biological role, ribosome-inactivating protein of type 1, inhibits protein synthesis in animal cells. Useful as immunotoxin for pharmacological applications. This chain is Ribosome-inactivating protein saporin-6 (SAP6), found in Saponaria officinalis (Common soapwort).